A 366-amino-acid polypeptide reads, in one-letter code: 3-dehydroquinate synthase (366 aa).

NAD(+) contacts are provided by residues Asp-71–Lys-76, Gly-105–Asp-109, Thr-129–Thr-130, Lys-142, Lys-151, and Cys-169–Thr-172. Positions 184, 247, and 264 each coordinate Zn(2+).

Belongs to the sugar phosphate cyclases superfamily. Dehydroquinate synthase family. It depends on Co(2+) as a cofactor. Zn(2+) is required as a cofactor. The cofactor is NAD(+).

The protein localises to the cytoplasm. The enzyme catalyses 7-phospho-2-dehydro-3-deoxy-D-arabino-heptonate = 3-dehydroquinate + phosphate. It participates in metabolic intermediate biosynthesis; chorismate biosynthesis; chorismate from D-erythrose 4-phosphate and phosphoenolpyruvate: step 2/7. Catalyzes the conversion of 3-deoxy-D-arabino-heptulosonate 7-phosphate (DAHP) to dehydroquinate (DHQ). The chain is 3-dehydroquinate synthase from Serratia proteamaculans (strain 568).